We begin with the raw amino-acid sequence, 418 residues long: Tyrosine--tRNA ligase (418 aa).

An L-tyrosine-binding site is contributed by Tyr-34. The 'HIGH' region signature appears at 39-48 (PTADSLHLGH). Positions 169 and 173 each coordinate L-tyrosine. Residues 229–233 (KFGKS) carry the 'KMSKS' region motif. Lys-232 serves as a coordination point for ATP. One can recognise an S4 RNA-binding domain in the interval 352–418 (HNIVELLVTA…GKKKYFVLTY (67 aa)).

This sequence belongs to the class-I aminoacyl-tRNA synthetase family. TyrS type 1 subfamily. In terms of assembly, homodimer.

Its subcellular location is the cytoplasm. The catalysed reaction is tRNA(Tyr) + L-tyrosine + ATP = L-tyrosyl-tRNA(Tyr) + AMP + diphosphate + H(+). Its function is as follows. Catalyzes the attachment of tyrosine to tRNA(Tyr) in a two-step reaction: tyrosine is first activated by ATP to form Tyr-AMP and then transferred to the acceptor end of tRNA(Tyr). The protein is Tyrosine--tRNA ligase of Streptococcus mutans serotype c (strain ATCC 700610 / UA159).